Consider the following 161-residue polypeptide: Phosphopantetheine adenylyltransferase (161 aa).

T9 lines the substrate pocket. Residues 9 to 10 (TF) and H17 contribute to the ATP site. 3 residues coordinate substrate: K41, L73, and R87. ATP contacts are provided by residues 88–90 (GLR), E98, and 123–129 (YQFISGT).

It belongs to the bacterial CoaD family. In terms of assembly, homohexamer. The cofactor is Mg(2+).

The protein resides in the cytoplasm. It catalyses the reaction (R)-4'-phosphopantetheine + ATP + H(+) = 3'-dephospho-CoA + diphosphate. It functions in the pathway cofactor biosynthesis; coenzyme A biosynthesis; CoA from (R)-pantothenate: step 4/5. Functionally, reversibly transfers an adenylyl group from ATP to 4'-phosphopantetheine, yielding dephospho-CoA (dPCoA) and pyrophosphate. The polypeptide is Phosphopantetheine adenylyltransferase (Cupriavidus pinatubonensis (strain JMP 134 / LMG 1197) (Cupriavidus necator (strain JMP 134))).